A 612-amino-acid polypeptide reads, in one-letter code: Pentatricopeptide repeat-containing protein At4g14050, mitochondrial (612 aa).

The N-terminal 24 residues, 1–24 (MLIPHYLHQLQLCARNRTLTTAKA), are a transit peptide targeting the mitochondrion. PPR repeat units follow at residues 37-71 (CCPL…DHIA), 72-103 (WASV…GLRP), 104-138 (DDFV…EYAN), 139-169 (DEVV…IRVK), 170-204 (NTIS…NLYS), 205-235 (WTAL…RVDI), 237-271 (DPLV…GFDS), 272-302 (CVFI…MRHR), 303-337 (DVVS…GVKP), 338-373 (NEVT…GIRP), and 374-408 (SLQH…PDEP). Positions 409–485 (TWAALLSACK…DPGHSSVEVR (77 aa)) are type E motif. Residues 486–516 (KETEVFYAGETSHPLKEDIFRLLKKLEEEMR) form a type E(+) motif region. Positions 518-612 (RNGYVPDTSW…GGKCSCNDFW (95 aa)) are type DYW motif.

The protein belongs to the PPR family. PCMP-H subfamily. Interacts with MORF8/RIP1 and MORF1/RIP8.

It is found in the mitochondrion. Its function is as follows. Involved in C-to-U editing of mitochondrial RNA. Required specifically for editing the mitochondrial NAD4, MT-CYB/COB and RPL16 transcripts. This chain is Pentatricopeptide repeat-containing protein At4g14050, mitochondrial (PCMP-H13), found in Arabidopsis thaliana (Mouse-ear cress).